The following is a 533-amino-acid chain: Lysine--tRNA ligase (533 aa).

The 'HIGH' region motif lies at 28–36 (PSGHIHIGN). The 'KMSKS' region signature appears at 278-282 (PMSSS).

Belongs to the class-I aminoacyl-tRNA synthetase family.

Its subcellular location is the cytoplasm. It catalyses the reaction tRNA(Lys) + L-lysine + ATP = L-lysyl-tRNA(Lys) + AMP + diphosphate. This Methanococcus maripaludis (strain DSM 14266 / JCM 13030 / NBRC 101832 / S2 / LL) protein is Lysine--tRNA ligase (lysS).